Consider the following 296-residue polypeptide: Cobalamin trafficking protein CblD (296 aa).

The N-terminal 38 residues, 1-38 (MAHVLCNRARLVSYLPGFCSLVKRVINPRAFSTAGSSG), are a transit peptide targeting the mitochondrion. N6-acetyllysine is present on K203.

In terms of assembly, heterodimer with MMACHC. Forms a multiprotein complex with MMACHC, MTR and MTRR.

It localises to the cytoplasm. The protein localises to the mitochondrion. Involved in cobalamin metabolism and trafficking. Plays a role in regulating the biosynthesis and the proportion of two coenzymes, methylcob(III)alamin (MeCbl) and 5'-deoxyadenosylcobalamin (AdoCbl). Promotes oxidation of cob(II)alamin bound to MMACHC. The processing of cobalamin in the cytosol occurs in a multiprotein complex composed of at least MMACHC, MMADHC, MTRR (methionine synthase reductase) and MTR (methionine synthase) which may contribute to shuttle safely and efficiently cobalamin towards MTR in order to produce methionine. This Rattus norvegicus (Rat) protein is Cobalamin trafficking protein CblD (Mmadhc).